A 559-amino-acid polypeptide reads, in one-letter code: MPSIKSDIEIARAAAKKPIFEIGAKLGIPVEQLVPYGHDKAKVSAEFIAAQAGKKDGKLILVTAINPTPAGEGKTTTTVGLGDGLNRIGKKAVVCIREASLGPCFGVKGGAAGGGYAQVVPMEDINLHFTGDFHAITSAHNLLAAMIDNHIYWGNEENIDIRRITWRRVMDMNDRALRSMVLSLGGVANGFPRQGGFDITVASEVMAILCLATDLKDLERRLGDIIIGYRFDRTPVHARDLKADGAMAVLLKDAMQPNLVQTLENNPAFVHGGPFANIAHGCNSVTATKTALKLGDYVVTEAGFGADLGAEKFFDIKCRKAGLKPDAAVIVATVRALKMNGGVKKDDLGTEDVAALKKGCANLGRHVANVRRFGVPVVVAINHFVSDTDAEIAAVKEFVSRLGAEAILCRHWALGSAGIEDLAHKVVELAESGQAKFQPLYGDDLSLFEKIEIVASKIYHAGEVTADKAVRDQLQTWEEQGYGKLPICMAKTQYSFSTDPNLRGAPEGHIVTVREVRLSAGAGFVVAITGEIMTMPGLPKSPSAERIFLNDQGYIEGLF.

ATP is bound at residue 68–75 (TPAGEGKT).

It belongs to the formate--tetrahydrofolate ligase family.

The enzyme catalyses (6S)-5,6,7,8-tetrahydrofolate + formate + ATP = (6R)-10-formyltetrahydrofolate + ADP + phosphate. It functions in the pathway one-carbon metabolism; tetrahydrofolate interconversion. This is Formate--tetrahydrofolate ligase from Rhizobium johnstonii (strain DSM 114642 / LMG 32736 / 3841) (Rhizobium leguminosarum bv. viciae).